Here is a 144-residue protein sequence, read N- to C-terminus: 3-hydroxyacyl-[acyl-carrier-protein] dehydratase FabZ (144 aa).

The active site involves His48.

Belongs to the thioester dehydratase family. FabZ subfamily.

It localises to the cytoplasm. It carries out the reaction a (3R)-hydroxyacyl-[ACP] = a (2E)-enoyl-[ACP] + H2O. Functionally, involved in unsaturated fatty acids biosynthesis. Catalyzes the dehydration of short chain beta-hydroxyacyl-ACPs and long chain saturated and unsaturated beta-hydroxyacyl-ACPs. The polypeptide is 3-hydroxyacyl-[acyl-carrier-protein] dehydratase FabZ (Bacillus pumilus (strain SAFR-032)).